Reading from the N-terminus, the 155-residue chain is Ribonuclease H (155 aa).

The 142-residue stretch at 1-142 (MLKQVEIFTD…CDELARAAAM (142 aa)) folds into the RNase H type-1 domain. 4 residues coordinate Mg(2+): Asp-10, Glu-48, Asp-70, and Asp-134.

Belongs to the RNase H family. In terms of assembly, monomer. It depends on Mg(2+) as a cofactor.

It localises to the cytoplasm. The catalysed reaction is Endonucleolytic cleavage to 5'-phosphomonoester.. In terms of biological role, endonuclease that specifically degrades the RNA of RNA-DNA hybrids. The sequence is that of Ribonuclease H from Escherichia coli O127:H6 (strain E2348/69 / EPEC).